The following is a 921-amino-acid chain: Protein translocase subunit SecA (921 aa).

Residues glutamine 87, 105-109 (GEGKT), and aspartate 516 each bind ATP. Cysteine 905, cysteine 907, cysteine 916, and histidine 917 together coordinate Zn(2+).

This sequence belongs to the SecA family. Monomer and homodimer. Part of the essential Sec protein translocation apparatus which comprises SecA, SecYEG and auxiliary proteins SecDF-YajC and YidC. It depends on Zn(2+) as a cofactor.

The protein resides in the cell inner membrane. It is found in the cytoplasm. It carries out the reaction ATP + H2O + cellular proteinSide 1 = ADP + phosphate + cellular proteinSide 2.. Part of the Sec protein translocase complex. Interacts with the SecYEG preprotein conducting channel. Has a central role in coupling the hydrolysis of ATP to the transfer of proteins into and across the cell membrane, serving both as a receptor for the preprotein-SecB complex and as an ATP-driven molecular motor driving the stepwise translocation of polypeptide chains across the membrane. This Albidiferax ferrireducens (strain ATCC BAA-621 / DSM 15236 / T118) (Rhodoferax ferrireducens) protein is Protein translocase subunit SecA.